The primary structure comprises 337 residues: Ketol-acid reductoisomerase (NADP(+)) (337 aa).

Residues 3 to 183 (LEMFYDDDAD…GGTRAGVIKT (181 aa)) form the KARI N-terminal Rossmann domain. Residues 26–29 (YGSQ), K49, S52, S54, and 84–87 (DTAQ) contribute to the NADP(+) site. H109 is a catalytic residue. G135 provides a ligand contact to NADP(+). In terms of domain architecture, KARI C-terminal knotted spans 184–329 (TFKDETETDL…KKLRDLMSWV (146 aa)). D192, E196, E228, and E232 together coordinate Mg(2+). S253 lines the substrate pocket.

Belongs to the ketol-acid reductoisomerase family. Mg(2+) is required as a cofactor.

It carries out the reaction (2R)-2,3-dihydroxy-3-methylbutanoate + NADP(+) = (2S)-2-acetolactate + NADPH + H(+). The catalysed reaction is (2R,3R)-2,3-dihydroxy-3-methylpentanoate + NADP(+) = (S)-2-ethyl-2-hydroxy-3-oxobutanoate + NADPH + H(+). The protein operates within amino-acid biosynthesis; L-isoleucine biosynthesis; L-isoleucine from 2-oxobutanoate: step 2/4. It participates in amino-acid biosynthesis; L-valine biosynthesis; L-valine from pyruvate: step 2/4. In terms of biological role, involved in the biosynthesis of branched-chain amino acids (BCAA). Catalyzes an alkyl-migration followed by a ketol-acid reduction of (S)-2-acetolactate (S2AL) to yield (R)-2,3-dihydroxy-isovalerate. In the isomerase reaction, S2AL is rearranged via a Mg-dependent methyl migration to produce 3-hydroxy-3-methyl-2-ketobutyrate (HMKB). In the reductase reaction, this 2-ketoacid undergoes a metal-dependent reduction by NADPH to yield (R)-2,3-dihydroxy-isovalerate. The chain is Ketol-acid reductoisomerase (NADP(+)) from Mycobacterium bovis (strain BCG / Pasteur 1173P2).